The chain runs to 97 residues: Small ribosomal subunit protein bS18c (97 aa).

This sequence belongs to the bacterial ribosomal protein bS18 family. Part of the 30S ribosomal subunit.

Its subcellular location is the plastid. The protein localises to the chloroplast. The polypeptide is Small ribosomal subunit protein bS18c (Oenothera glazioviana (Large-flowered evening primrose)).